We begin with the raw amino-acid sequence, 159 residues long: SsrA-binding protein (159 aa).

The protein belongs to the SmpB family.

The protein localises to the cytoplasm. Functionally, required for rescue of stalled ribosomes mediated by trans-translation. Binds to transfer-messenger RNA (tmRNA), required for stable association of tmRNA with ribosomes. tmRNA and SmpB together mimic tRNA shape, replacing the anticodon stem-loop with SmpB. tmRNA is encoded by the ssrA gene; the 2 termini fold to resemble tRNA(Ala) and it encodes a 'tag peptide', a short internal open reading frame. During trans-translation Ala-aminoacylated tmRNA acts like a tRNA, entering the A-site of stalled ribosomes, displacing the stalled mRNA. The ribosome then switches to translate the ORF on the tmRNA; the nascent peptide is terminated with the 'tag peptide' encoded by the tmRNA and targeted for degradation. The ribosome is freed to recommence translation, which seems to be the essential function of trans-translation. This chain is SsrA-binding protein, found in Coxiella burnetii (strain CbuG_Q212) (Coxiella burnetii (strain Q212)).